The chain runs to 148 residues: Stathmin (148 aa).

In terms of domain architecture, SLD spans 4–145 (SDIQVKELEK…NKEGKDPGEA (142 aa)). Ser16 carries the phosphoserine; by PKA modification. Ser38 bears the Phosphoserine; by CDK1 mark. The stretch at 41–140 (KKKDLSLEEI…EEVRKNKEGK (100 aa)) forms a coiled coil. Ser63 is subject to Phosphoserine; by PKA. A disordered region spans residues 122 to 148 (RLREKDKHIEEVRKNKEGKDPGEAETN).

It belongs to the stathmin family. In terms of assembly, binds to two alpha/beta-tubulin heterodimers. Post-translationally, many different phosphorylated forms are observed depending on specific combinations among the sites which can be phosphorylated. MAPK is responsible for the phosphorylation of stathmin in response to NGF.

It localises to the cytoplasm. The protein resides in the cytoskeleton. Its function is as follows. Involved in the regulation of the microtubule (MT) filament system by destabilizing microtubules. It prevents assembly and promotes disassembly of microtubules. The chain is Stathmin (STMN1) from Gallus gallus (Chicken).